We begin with the raw amino-acid sequence, 133 residues long: UPF0102 protein ABSDF1354 (133 aa).

The protein belongs to the UPF0102 family.

The chain is UPF0102 protein ABSDF1354 from Acinetobacter baumannii (strain SDF).